The primary structure comprises 82 residues: DNA-directed RNA polymerase subunit Rpo5 (82 aa).

Belongs to the archaeal Rpo5/eukaryotic RPB5 RNA polymerase subunit family. Part of the RNA polymerase complex.

The protein localises to the cytoplasm. The enzyme catalyses RNA(n) + a ribonucleoside 5'-triphosphate = RNA(n+1) + diphosphate. In terms of biological role, DNA-dependent RNA polymerase (RNAP) catalyzes the transcription of DNA into RNA using the four ribonucleoside triphosphates as substrates. The polypeptide is DNA-directed RNA polymerase subunit Rpo5 (Thermococcus celer).